The following is a 212-amino-acid chain: UPF0319 protein PBPRA2789 (212 aa).

Residues 1–21 form the signal peptide; the sequence is MKKILLAFTLPLVLASQTAMA.

It belongs to the UPF0319 family.

This is UPF0319 protein PBPRA2789 from Photobacterium profundum (strain SS9).